We begin with the raw amino-acid sequence, 93 residues long: Large ribosomal subunit protein uL23cz/uL23cy (93 aa).

The protein belongs to the universal ribosomal protein uL23 family. Part of the 50S ribosomal subunit.

The protein localises to the plastid. It localises to the chloroplast. Its function is as follows. Binds to 23S rRNA. The sequence is that of Large ribosomal subunit protein uL23cz/uL23cy (rpl23-A) from Lactuca sativa (Garden lettuce).